The primary structure comprises 244 residues: Cobalt transport protein CbiM (244 aa).

Positions 1–28 are cleaved as a signal peptide; the sequence is MKLLKNKKVTFVALLAILAVLSTQSVSA. 6 helical membrane passes run 36–56, 71–91, 108–128, 135–155, 166–186, and 208–228; these read LPLFWCIFWFAVFLPFFVVGL, TMLALSGAFIFILSSLKIPSV, FGPSVISVLGTICLLFQALLL, TLGANAFSMAVVGPFVGYFVY, PVSIFICAVIADLATYATTSI, and GVFLTTQIPIAIVEGLLTVVL.

It belongs to the CbiM family. Forms an energy-coupling factor (ECF) transporter complex composed of an ATP-binding protein (A component, CbiO), a transmembrane protein (T component, CbiQ) and 2 possible substrate-capture proteins (S components, CbiM and CbiN) of unknown stoichimetry.

The protein resides in the cell membrane. It participates in cofactor biosynthesis; adenosylcobalamin biosynthesis. Functionally, part of the energy-coupling factor (ECF) transporter complex CbiMNOQ involved in cobalt import. In Streptococcus sanguinis (strain SK36), this protein is Cobalt transport protein CbiM.